Here is a 287-residue protein sequence, read N- to C-terminus: ATP synthase gamma chain (287 aa).

Belongs to the ATPase gamma chain family. As to quaternary structure, F-type ATPases have 2 components, CF(1) - the catalytic core - and CF(0) - the membrane proton channel. CF(1) has five subunits: alpha(3), beta(3), gamma(1), delta(1), epsilon(1). CF(0) has three main subunits: a, b and c.

Its subcellular location is the cell inner membrane. In terms of biological role, produces ATP from ADP in the presence of a proton gradient across the membrane. The gamma chain is believed to be important in regulating ATPase activity and the flow of protons through the CF(0) complex. The chain is ATP synthase gamma chain from Citrobacter koseri (strain ATCC BAA-895 / CDC 4225-83 / SGSC4696).